The sequence spans 422 residues: S100P-binding protein (422 aa).

3 disordered regions span residues 1–28 (MMCSLVPSEQSSGTSLLPKDNAPFSWSS), 61–135 (LKDD…TPAK), and 170–292 (YVSE…DSGK). Positions 80–90 (DDSRNVEKGEK) are enriched in basic and acidic residues. The residue at position 195 (serine 195) is a Phosphoserine. Over residues 231-241 (VSDKNMSDSKK) the composition is skewed to basic and acidic residues. The segment covering 255–269 (TPNTGSSRRNGSYKS) has biased composition (polar residues). Over residues 274–283 (KLPVSSSSSK) the composition is skewed to low complexity.

In terms of assembly, interacts with S100P.

It is found in the nucleus. The protein is S100P-binding protein of Bos taurus (Bovine).